The following is a 120-amino-acid chain: NAD(P)H-quinone oxidoreductase subunit 3, chloroplastic (120 aa).

A run of 3 helical transmembrane segments spans residues 9-29, 64-84, and 88-108; these read FFWA…FISG, MFAL…PWAM, and VLGV…IIGL.

This sequence belongs to the complex I subunit 3 family. NDH is composed of at least 16 different subunits, 5 of which are encoded in the nucleus.

Its subcellular location is the plastid. It is found in the chloroplast thylakoid membrane. It catalyses the reaction a plastoquinone + NADH + (n+1) H(+)(in) = a plastoquinol + NAD(+) + n H(+)(out). The catalysed reaction is a plastoquinone + NADPH + (n+1) H(+)(in) = a plastoquinol + NADP(+) + n H(+)(out). Functionally, NDH shuttles electrons from NAD(P)H:plastoquinone, via FMN and iron-sulfur (Fe-S) centers, to quinones in the photosynthetic chain and possibly in a chloroplast respiratory chain. The immediate electron acceptor for the enzyme in this species is believed to be plastoquinone. Couples the redox reaction to proton translocation, and thus conserves the redox energy in a proton gradient. The chain is NAD(P)H-quinone oxidoreductase subunit 3, chloroplastic from Atropa belladonna (Belladonna).